The following is a 428-amino-acid chain: C4-dicarboxylate transport protein (428 aa).

8 helical membrane-spanning segments follow: residues 8–28, 44–64, 78–98, 148–168, 184–204, 222–242, 307–327, and 355–375; these read VLYV…HYYP, LIKM…IAGM, LLYF…ATHI, GEIL…AHLG, VLFG…FGAM, LIGT…GAIA, IYMT…LTWM, and AATL…ILGI.

This sequence belongs to the dicarboxylate/amino acid:cation symporter (DAACS) (TC 2.A.23) family.

The protein localises to the cell inner membrane. Responsible for the transport of dicarboxylates such as succinate, fumarate, and malate from the periplasm across the membrane. This is C4-dicarboxylate transport protein from Burkholderia pseudomallei (strain 1106a).